The sequence spans 150 residues: MAKRVSLPDVVISAPKAVFKPAKEEALACILPKYYKSMADVSIKTNSVIDKCWFCNQDLVFRPISIETYKGGEVGYFCSKICRDSLASMVKSHVALREEPKISLLPLVFYEDKEKVINTINLLRDKDGVYGSCYFKENSQIIDISLRSLL.

This sequence belongs to the orthopoxvirus VLTF-2/OPG126 family. In terms of assembly, interacts with itself. Interacts with the late transcription factors VLTF-1/OPG093.

Functionally, acts with RNA polymerase to initiate transcription from late gene promoters. This Vaccinia virus (strain Copenhagen) (VACV) protein is Viral late gene transcription factor 2 (OPG126).